A 342-amino-acid chain; its full sequence is Anthranilate phosphoribosyltransferase (342 aa).

Residues G83, 86 to 87 (GD), T91, 93 to 96 (NIST), 111 to 119 (KHGNRGVSS), and S123 each bind 5-phospho-alpha-D-ribose 1-diphosphate. G83 contacts anthranilate. S95 provides a ligand contact to Mg(2+). N114 is a binding site for anthranilate. R169 serves as a coordination point for anthranilate. 2 residues coordinate Mg(2+): D228 and E229.

Belongs to the anthranilate phosphoribosyltransferase family. Homodimer. Mg(2+) serves as cofactor.

The catalysed reaction is N-(5-phospho-beta-D-ribosyl)anthranilate + diphosphate = 5-phospho-alpha-D-ribose 1-diphosphate + anthranilate. The protein operates within amino-acid biosynthesis; L-tryptophan biosynthesis; L-tryptophan from chorismate: step 2/5. Functionally, catalyzes the transfer of the phosphoribosyl group of 5-phosphorylribose-1-pyrophosphate (PRPP) to anthranilate to yield N-(5'-phosphoribosyl)-anthranilate (PRA). The polypeptide is Anthranilate phosphoribosyltransferase (Paraburkholderia phymatum (strain DSM 17167 / CIP 108236 / LMG 21445 / STM815) (Burkholderia phymatum)).